Consider the following 388-residue polypeptide: Carbamoyl phosphate synthase small chain (388 aa).

The tract at residues 1–194 is CPSase; the sequence is MAQNPLSKPT…WPEGYARQEA (194 aa). L-glutamine is bound by residues Ser53, Gly246, and Gly248. Positions 198-387 constitute a Glutamine amidotransferase type-1 domain; sequence KVVAIDYGAK…AAAMDAQKAE (190 aa). Cys276 serves as the catalytic Nucleophile. L-glutamine is bound by residues Leu277, Gln280, Asn318, Gly320, and Phe321. Active-site residues include His360 and Glu362.

Belongs to the CarA family. Composed of two chains; the small (or glutamine) chain promotes the hydrolysis of glutamine to ammonia, which is used by the large (or ammonia) chain to synthesize carbamoyl phosphate. Tetramer of heterodimers (alpha,beta)4.

It catalyses the reaction hydrogencarbonate + L-glutamine + 2 ATP + H2O = carbamoyl phosphate + L-glutamate + 2 ADP + phosphate + 2 H(+). The catalysed reaction is L-glutamine + H2O = L-glutamate + NH4(+). Its pathway is amino-acid biosynthesis; L-arginine biosynthesis; carbamoyl phosphate from bicarbonate: step 1/1. It participates in pyrimidine metabolism; UMP biosynthesis via de novo pathway; (S)-dihydroorotate from bicarbonate: step 1/3. Its function is as follows. Small subunit of the glutamine-dependent carbamoyl phosphate synthetase (CPSase). CPSase catalyzes the formation of carbamoyl phosphate from the ammonia moiety of glutamine, carbonate, and phosphate donated by ATP, constituting the first step of 2 biosynthetic pathways, one leading to arginine and/or urea and the other to pyrimidine nucleotides. The small subunit (glutamine amidotransferase) binds and cleaves glutamine to supply the large subunit with the substrate ammonia. The protein is Carbamoyl phosphate synthase small chain of Ruegeria pomeroyi (strain ATCC 700808 / DSM 15171 / DSS-3) (Silicibacter pomeroyi).